The chain runs to 378 residues: Alpha-D-ribose 1-methylphosphonate 5-triphosphate diphosphatase (378 aa).

This sequence belongs to the metallo-dependent hydrolases superfamily.

The catalysed reaction is alpha-D-ribose 1-methylphosphonate 5-triphosphate + H2O = alpha-D-ribose 1-methylphosphonate 5-phosphate + diphosphate + H(+). Functionally, catalyzes the hydrolysis of alpha-D-ribose 1-methylphosphonate triphosphate (RPnTP) to form alpha-D-ribose 1-methylphosphonate phosphate (PRPn) and diphosphate. This Escherichia coli (strain K12) protein is Alpha-D-ribose 1-methylphosphonate 5-triphosphate diphosphatase (phnM).